The chain runs to 248 residues: Chromatin target of PRMT1 protein (248 aa).

The residue at position 2 (Ala-2) is an N-acetylalanine. Residues Ser-40, Ser-49, and Ser-64 each carry the phosphoserine modification. Residue Lys-70 forms a Glycyl lysine isopeptide (Lys-Gly) (interchain with G-Cter in SUMO2) linkage. A disordered region spans residues 151-204 (LRRGGVRGRGGPGRGGLGRGAMGRGGIGGRGRGMIGRGRGGFGGRGRGRGRGRG). Residues 153 to 206 (RGGVRGRGGPGRGGLGRGAMGRGGIGGRGRGMIGRGRGGFGGRGRGRGRGRGAL) are interaction with PRMT1. The segment covering 157–195 (RGRGGPGRGGLGRGAMGRGGIGGRGRGMIGRGRGGFGGR) has biased composition (gly residues). The GAR motif; involved in 5hmC binding signature appears at 194–203 (GRGRGRGRGR). At Thr-242 the chain carries Phosphothreonine.

In terms of assembly, interacts with PRMT1 and PRMT5. Interacts with the 5FMC complex; the interaction is methylation-dependent. Interacts with FYTTD1, SET and PRC1 complex members CBX4, RNF2 and PHC2; the interactions are methylation-independent. Interacts with ZNF148. Interacts with WDR77 and ER. Asymmetrically methylated by PRMT1. Symmetrically methylated by PRMT5.

The protein localises to the nucleus. Its subcellular location is the nucleolus. It localises to the nucleoplasm. The protein resides in the nucleus speckle. In terms of biological role, plays an important role in the ligand-dependent activation of estrogen receptor target genes. May play a role in the silencing of fetal globin genes. Recruits the 5FMC complex to ZNF148, leading to desumoylation of ZNF148 and subsequent transactivation of ZNF148 target genes. Required for the tumorigenicity of glioblastoma cells. Binds to 5-hydroxymethylcytosine (5hmC) and associates with the methylosome complex containing PRMT1, PRMT5, MEP50 and ERH. The CHTOP-methylosome complex associated with 5hmC methylates H4R3 and transactivates genes involved in glioblastomagenesis. The sequence is that of Chromatin target of PRMT1 protein (CHTOP) from Bos taurus (Bovine).